The primary structure comprises 847 residues: Protein SEY1 (847 aa).

Topologically, residues 1-720 (MSSGEPLSET…KRSIVQHVTQ (720 aa)) are cytoplasmic. The GB1/RHD3-type G domain maps to 55-290 (GHNYHIVAVF…VENDIFKPEY (236 aa)). 65–72 (GSQSTGKS) is a binding site for GTP. The chain crosses the membrane as a helical span at residues 721–741 (IPYYIYIIILLLGWNEFMAVV). At 742-744 (RNP) the chain is on the lumenal side. The chain crosses the membrane as a helical span at residues 745 to 765 (FTFSLAIILGASLYILYTMNL). Residues 766 to 847 (LKPALTVTQR…VTSLNVVEEE (82 aa)) are Cytoplasmic-facing.

This sequence belongs to the TRAFAC class dynamin-like GTPase superfamily. GB1/RHD3 GTPase family. RHD3 subfamily.

The protein localises to the endoplasmic reticulum membrane. Functionally, cooperates with the reticulon proteins and tubule-shaping DP1 family proteins to generate and maintain the structure of the tubular endoplasmic reticulum network. Has GTPase activity, which is required for its function in ER organization. The chain is Protein SEY1 from Lodderomyces elongisporus (strain ATCC 11503 / CBS 2605 / JCM 1781 / NBRC 1676 / NRRL YB-4239) (Yeast).